Reading from the N-terminus, the 1446-residue chain is DNA polymerase III PolC-type (1446 aa).

In terms of domain architecture, Exonuclease spans 425-581 (YVIFDVETTG…ADAESTGYLL (157 aa)).

The protein belongs to the DNA polymerase type-C family. PolC subfamily.

It is found in the cytoplasm. It carries out the reaction DNA(n) + a 2'-deoxyribonucleoside 5'-triphosphate = DNA(n+1) + diphosphate. Functionally, required for replicative DNA synthesis. This DNA polymerase also exhibits 3' to 5' exonuclease activity. The polypeptide is DNA polymerase III PolC-type (Latilactobacillus sakei subsp. sakei (strain 23K) (Lactobacillus sakei subsp. sakei)).